Here is a 526-residue protein sequence, read N- to C-terminus: Peptide chain release factor 3 (526 aa).

In terms of domain architecture, tr-type G spans 8–277 (GKRRTFAIIS…GLTDWAPAPQ (270 aa)). Residues 17-24 (SHPDAGKT), 85-89 (DTPGH), and 139-142 (NKLD) contribute to the GTP site.

This sequence belongs to the TRAFAC class translation factor GTPase superfamily. Classic translation factor GTPase family. PrfC subfamily.

It is found in the cytoplasm. Functionally, increases the formation of ribosomal termination complexes and stimulates activities of RF-1 and RF-2. It binds guanine nucleotides and has strong preference for UGA stop codons. It may interact directly with the ribosome. The stimulation of RF-1 and RF-2 is significantly reduced by GTP and GDP, but not by GMP. The chain is Peptide chain release factor 3 from Aliivibrio fischeri (strain ATCC 700601 / ES114) (Vibrio fischeri).